The sequence spans 368 residues: Transcription factor TGA1 (368 aa).

Residues 53–65 (LDNNVSEDTSHGT) show a composition bias toward polar residues. The tract at residues 53 to 83 (LDNNVSEDTSHGTAGTPHMFDQEASTSRHPD) is disordered. In terms of domain architecture, bZIP spans 82 to 145 (PDKIQRRLAQ…NGIDTNSLGF (64 aa)). Coiled coils occupy residues 83-131 (DKIQ…RQQG) and 261-281 (NLKQ…EKLQ). Residues 84 to 104 (KIQRRLAQNREAARKSRLRKK) form a basic motif region. The leucine-zipper stretch occupies residues 110–124 (LETSRLKLIQLEQEL). The DOG1 domain maps to 153 to 363 (IAAFEMEYGH…RALSSSWATR (211 aa)). The cysteines at positions 260 and 266 are disulfide-linked.

This sequence belongs to the bZIP family. In terms of assembly, binds DNA as a dimer. The reduced form interacts with NPR1. As to expression, predominantly expressed in roots.

The protein localises to the nucleus. Transcriptional activator that binds specifically to the DNA sequence 5'-TGACG-3'. Recognizes ocs elements like the as-1 motif of the cauliflower mosaic virus 35S promoter. Binding to the as-1-like cis elements mediate auxin- and salicylic acid-inducible transcription. May be involved in the induction of the systemic acquired resistance (SAR) via its interaction with NPR1. Could also bind to the Hex-motif (5'-TGACGTGG-3') another cis-acting element found in plant histone promoters. The chain is Transcription factor TGA1 (TGA1) from Arabidopsis thaliana (Mouse-ear cress).